Reading from the N-terminus, the 790-residue chain is MPAAPVLRPPPPPATPAPPAPSRPAPPIPGHRGPCDHSLKCLSSKISERKLPGPWLPAGRGPLEKPVLGPRGAVMPLFSPQSSLHSVRAEHSPLKPRVVTVVKLGGQPLRKATLLLNRRSVQTFEQLLSDISEALGFPRWKNDRVRKLFTLKGREVKSVSDFFREGDAFIAMGKEPLTLKSIQLAMEELYPKNRALALAPHSRVPSPRLRSRLPSKLLKGSHRCGEAGSYSAEMESKAVSRHQGKTSTVLAPEDKARAQKWVRGKQESEPGGPPSPGAATQEETHASGEKHLGVEIEKTSGEIVRCEKCKRERELQLGLQREPCPLGTSELDLGRAQKRDSEKLVRTKSCRRPSEAKSTDGEEGWKGDSHRGSPRDPPQELRRPNSNSDKKEIRGSESQDSHPQGAPKAQKDLVEGPPAVEEGPIDMRREDRHTCRSKHAAWLRREQQAEPPQLPRTRGEEKQAEHEKKPGGLGERRAPEKESKRKLEEKRPERPSGRKPRPKGIISADVEKHYDIGGVIGDGNFATVKECRHRETKQAYAMKMIDKSQLKGKEDIVDSEILIIQSLSHPNIVKLHEVYETEAEIYLIMEYVQGGDLFDAIVENVKFPEPEAAVMITDLCKALVHMHDKNIVHRDVKPENLLVQRNEDKSITLKLADFGLAKYVVRPIFTVCGTPTYVAPEILSEKGYGLEVDMWAAGVILYILLCGFPPFRSPERDQDELFNIIQVGQFEFLSPYWDNISDAAKDLVRNLLEVDPKKRYTAEQVLQHPWIEMVGHTNTGNSQKEESPNS.

The tract at residues 1-37 (MPAAPVLRPPPPPATPAPPAPSRPAPPIPGHRGPCDH) is disordered. Over residues 7-29 (LRPPPPPATPAPPAPSRPAPPIP) the composition is skewed to pro residues. The 87-residue stretch at 97-183 (RVVTVVKLGG…KEPLTLKSIQ (87 aa)) folds into the Doublecortin domain. Residues 201–218 (HSRVPSPRLRSRLPSKLL) show a composition bias toward low complexity. Disordered regions lie at residues 201–290 (HSRV…SGEK) and 315–506 (LQLG…KGII). Composition is skewed to basic and acidic residues over residues 332–345 (DLGR…EKLV), 352–400 (RPSE…ESQD), 425–434 (IDMRREDRHT), and 457–496 (TRGE…ERPS). The region spanning 514–771 (YDIGGVIGDG…AEQVLQHPWI (258 aa)) is the Protein kinase domain. ATP-binding positions include 520-528 (IGDGNFATV) and Lys543. The Proton acceptor role is filled by Asp635.

Belongs to the protein kinase superfamily. CAMK Ser/Thr protein kinase family. CaMK subfamily. As to expression, highly expressed in brain and to a lower extent in liver and kidney.

It is found in the cytoplasm. Its subcellular location is the nucleus. The enzyme catalyses L-seryl-[protein] + ATP = O-phospho-L-seryl-[protein] + ADP + H(+). It catalyses the reaction L-threonyl-[protein] + ATP = O-phospho-L-threonyl-[protein] + ADP + H(+). This Mus musculus (Mouse) protein is Serine/threonine-protein kinase DCLK3 (Dclk3).